The chain runs to 353 residues: Protein AC18 (353 aa).

The protein resides in the host nucleus. The protein localises to the host cytoplasm. Its function is as follows. May play a role in occlusion-derived virions (ODV) formation and/or regulation of late viral gene expression. The protein is Protein AC18 (DA41) of Autographa californica nuclear polyhedrosis virus (AcMNPV).